A 298-amino-acid polypeptide reads, in one-letter code: GTP cyclohydrolase FolE2 (298 aa).

Belongs to the GTP cyclohydrolase IV family.

It carries out the reaction GTP + H2O = 7,8-dihydroneopterin 3'-triphosphate + formate + H(+). It participates in cofactor biosynthesis; 7,8-dihydroneopterin triphosphate biosynthesis; 7,8-dihydroneopterin triphosphate from GTP: step 1/1. Converts GTP to 7,8-dihydroneopterin triphosphate. In Pseudomonas aeruginosa (strain UCBPP-PA14), this protein is GTP cyclohydrolase FolE2.